An 822-amino-acid chain; its full sequence is Putative ESX-1 scaffolding and assembly protein SaeB (822 aa).

Functionally, may be involved in assembly of the ESX-1 / type VII specialized secretion system (T7SS), which exports several proteins including EsxA and EsxB. Involved in DNA conjugation in recipient (MDK8) but not donor (mc(2)155) strain. The polypeptide is Putative ESX-1 scaffolding and assembly protein SaeB (Mycolicibacterium smegmatis (strain ATCC 700084 / mc(2)155) (Mycobacterium smegmatis)).